The sequence spans 452 residues: Cysteine--tRNA ligase (452 aa).

Cys35 is a binding site for Zn(2+). The short motif at 37–47 (PTVYDRAHLGN) is the 'HIGH' region element. Zn(2+) is bound by residues Cys215, His240, and Glu244. The 'KMSKS' region signature appears at 273-277 (KMSKS). Position 276 (Lys276) interacts with ATP.

The protein belongs to the class-I aminoacyl-tRNA synthetase family. Monomer. Requires Zn(2+) as cofactor.

It is found in the cytoplasm. It carries out the reaction tRNA(Cys) + L-cysteine + ATP = L-cysteinyl-tRNA(Cys) + AMP + diphosphate. This chain is Cysteine--tRNA ligase, found in Gluconobacter oxydans (strain 621H) (Gluconobacter suboxydans).